A 312-amino-acid chain; its full sequence is MASYLDFEKNIQQIDEDIINAQIKGDTEAVSILKKNLEKEISKTYKNLSDFQRLQLARHPDRPYALDYIELILNDAHEIHGDRAFRDDPAIVCFMGYLGEKKIIVIGEQKGRGTKDKIARNFGMPHPEGYRKALRVARLAEKFQIPILFLIDTPGAYPGIGAEERGQSEAIARNLYELSDLKIPTIAIVIGEGGSGGALAIGVADRLAMMKNSVFSVISPEGCAAILWNDPAKSEAATKVMKVTADDLKSQGLIDDVIDEPTNGAHRNKEAAAVAIADYVKKSLNELENIDVRELSANRMQKILKLGAYQEA.

The CoA carboxyltransferase C-terminal domain occupies asparagine 36–glutamate 286.

The protein belongs to the AccA family. In terms of assembly, acetyl-CoA carboxylase is a heterohexamer composed of biotin carboxyl carrier protein (AccB), biotin carboxylase (AccC) and two subunits each of ACCase subunit alpha (AccA) and ACCase subunit beta (AccD).

The protein resides in the cytoplasm. It carries out the reaction N(6)-carboxybiotinyl-L-lysyl-[protein] + acetyl-CoA = N(6)-biotinyl-L-lysyl-[protein] + malonyl-CoA. It participates in lipid metabolism; malonyl-CoA biosynthesis; malonyl-CoA from acetyl-CoA: step 1/1. Its function is as follows. Component of the acetyl coenzyme A carboxylase (ACC) complex. First, biotin carboxylase catalyzes the carboxylation of biotin on its carrier protein (BCCP) and then the CO(2) group is transferred by the carboxyltransferase to acetyl-CoA to form malonyl-CoA. The protein is Acetyl-coenzyme A carboxylase carboxyl transferase subunit alpha of Campylobacter jejuni subsp. jejuni serotype O:23/36 (strain 81-176).